The following is a 176-amino-acid chain: MSRVGKSPIALQGAEVKLADGAITVKGPLGTITQPVNPLVNVANNDGTLNLAPVNESREANAMSGTMRAIIANAVHGVTKGFERKLTLVGVGYRAQAQGDKLNLSLGFSHPVVHQMPEGVKAETPTQTEIVIKGINKQQVGQVAAEVRGYRPPEPYKGKGVRYSDEVVILKETKKK.

This sequence belongs to the universal ribosomal protein uL6 family. In terms of assembly, part of the 50S ribosomal subunit.

In terms of biological role, this protein binds to the 23S rRNA, and is important in its secondary structure. It is located near the subunit interface in the base of the L7/L12 stalk, and near the tRNA binding site of the peptidyltransferase center. The sequence is that of Large ribosomal subunit protein uL6 from Burkholderia vietnamiensis (strain G4 / LMG 22486) (Burkholderia cepacia (strain R1808)).